Reading from the N-terminus, the 119-residue chain is Protein MRP-126 (119 aa).

EF-hand domains follow at residues 23–58 (DVFHQYSRREGDKDTLTRKELKLLIEKQLANYLKHV) and 59–94 (KNQVSIDQIFKDLDNNKDQQLSFGEVMLLIIRVTVA). Residues Thr-37, Glu-42, Asp-72, Asn-74, Asp-76, Gln-78, and Glu-83 each coordinate Ca(2+).

This sequence belongs to the S-100 family. In terms of tissue distribution, expressed in v-myb-transformed myelomonocytic cells.

The protein is Protein MRP-126 of Gallus gallus (Chicken).